The chain runs to 489 residues: Rhamnulokinase (489 aa).

13–17 (ASSGR) lines the ATP pocket. A disulfide bridge connects residues C68 and C222. Substrate is bound by residues G83 and 236–238 (HDT). D237 (proton acceptor) is an active-site residue. Position 259 (T259) interacts with ATP. N296 lines the substrate pocket. Q304 serves as a coordination point for ATP. The cysteines at positions 353 and 370 are disulfide-linked. G402 serves as a coordination point for ATP. Cysteines 413 and 417 form a disulfide.

This sequence belongs to the rhamnulokinase family. In terms of assembly, monomer. Mg(2+) serves as cofactor.

It catalyses the reaction L-rhamnulose + ATP = L-rhamnulose 1-phosphate + ADP + H(+). It participates in carbohydrate degradation; L-rhamnose degradation; glycerone phosphate from L-rhamnose: step 2/3. Its function is as follows. Involved in the catabolism of L-rhamnose (6-deoxy-L-mannose). Catalyzes the transfer of the gamma-phosphate group from ATP to the 1-hydroxyl group of L-rhamnulose to yield L-rhamnulose 1-phosphate. The polypeptide is Rhamnulokinase (Escherichia coli (strain 55989 / EAEC)).